A 127-amino-acid chain; its full sequence is Large ribosomal subunit protein bL12 (127 aa).

This sequence belongs to the bacterial ribosomal protein bL12 family. As to quaternary structure, homodimer. Part of the ribosomal stalk of the 50S ribosomal subunit. Forms a multimeric L10(L12)X complex, where L10 forms an elongated spine to which 2 to 4 L12 dimers bind in a sequential fashion. Binds GTP-bound translation factors.

In terms of biological role, forms part of the ribosomal stalk which helps the ribosome interact with GTP-bound translation factors. Is thus essential for accurate translation. The protein is Large ribosomal subunit protein bL12 of Chloroherpeton thalassium (strain ATCC 35110 / GB-78).